The following is a 252-amino-acid chain: U2 small nuclear ribonucleoprotein A' (252 aa).

LRR repeat units follow at residues 41–62 (PHDAIDFTDNDIQVLGNFPLSP), 63–84 (RIRTLLLARNRIAQIQSTLPNA), and 87–108 (NLKNLVLASNNIGELADLEVLG). In terms of domain architecture, LRRCT spans 121-159 (NPVTKKENYRYWVLWLCPQVRFLDYVKVKDAERQKAKEL).

Belongs to the U2 small nuclear ribonucleoprotein A family. In terms of assembly, associated with the spliceosome.

The protein localises to the nucleus. Functionally, involved in pre-mRNA splicing. The polypeptide is U2 small nuclear ribonucleoprotein A' (lea-1) (Neurospora crassa (strain ATCC 24698 / 74-OR23-1A / CBS 708.71 / DSM 1257 / FGSC 987)).